Here is a 294-residue protein sequence, read N- to C-terminus: tRNA dimethylallyltransferase (294 aa).

Residue 10 to 17 (GPTAVGKT) coordinates ATP. Position 12 to 17 (12 to 17 (TAVGKT)) interacts with substrate. The segment at 35 to 38 (DSQQ) is interaction with substrate tRNA.

This sequence belongs to the IPP transferase family. As to quaternary structure, monomer. The cofactor is Mg(2+).

It catalyses the reaction adenosine(37) in tRNA + dimethylallyl diphosphate = N(6)-dimethylallyladenosine(37) in tRNA + diphosphate. Catalyzes the transfer of a dimethylallyl group onto the adenine at position 37 in tRNAs that read codons beginning with uridine, leading to the formation of N6-(dimethylallyl)adenosine (i(6)A). The polypeptide is tRNA dimethylallyltransferase (Streptococcus gordonii (strain Challis / ATCC 35105 / BCRC 15272 / CH1 / DL1 / V288)).